The primary structure comprises 340 residues: Serpentine receptor class alpha-18 (340 aa).

6 consecutive transmembrane segments (helical) span residues 29–49 (FNFIFIITVVLISYCFTWLAI), 109–129 (VFELYLYYPTGYFSTYSVFSL), 149–169 (FIATSLLVLQLLLTMFSFYIV), 198–218 (VRTGVMVSCIIVTMFVYYVCV), 249–269 (ISIVLQFSCIMISSFGSNLLI), and 285–305 (IVSFLPGVTYANLCLPLVIYF).

Belongs to the nematode receptor-like protein sra family.

The protein localises to the membrane. The sequence is that of Serpentine receptor class alpha-18 (sra-18) from Caenorhabditis elegans.